The primary structure comprises 960 residues: FYVE, RhoGEF and PH domain-containing protein 1 (960 aa).

Disordered regions lie at residues methionine 1 to alanine 210 and alanine 226 to proline 355. Serine 48 carries the post-translational modification Phosphoserine. Residues proline 125–serine 135 are compositionally biased toward basic and acidic residues. Composition is skewed to pro residues over residues proline 137–serine 149, glycine 156–proline 165, and valine 173–alanine 190. Positions proline 171–proline 187 match the SH3-binding motif. A Phosphoserine modification is found at serine 205. Residues alanine 231–proline 251 are compositionally biased toward pro residues. Over residues arginine 273 to glycine 284 the composition is skewed to basic and acidic residues. Residues isoleucine 285–serine 294 are compositionally biased toward low complexity. Residues valine 335 to lysine 350 are compositionally biased toward acidic residues. The 189-residue stretch at lysine 372–alanine 560 folds into the DH domain. Residues glutamate 589–leucine 688 enclose the PH 1 domain. Positions asparagine 701–threonine 725 are disordered. Threonine 710 carries the phosphothreonine modification. Serine 714 is subject to Phosphoserine. An FYVE-type zinc finger spans residues glutamate 729–histidine 789. Cysteine 735, cysteine 738, cysteine 752, cysteine 755, cysteine 760, cysteine 763, cysteine 781, and cysteine 784 together coordinate Zn(2+). The PH 2 domain occupies asparagine 820–arginine 920. The disordered stretch occupies residues aspartate 922–threonine 960.

Interacts with DBNL/ABP1 and CTTN. Binds CDC42. May interact with CCPG1.

It is found in the cytoplasm. It localises to the cell projection. Its subcellular location is the lamellipodium. The protein resides in the ruffle. The protein localises to the cytoskeleton. Functionally, activates CDC42, a member of the Ras-like family of Rho- and Rac proteins, by exchanging bound GDP for free GTP. Plays a role in regulating the actin cytoskeleton and cell shape. The polypeptide is FYVE, RhoGEF and PH domain-containing protein 1 (Fgd1) (Mus musculus (Mouse)).